We begin with the raw amino-acid sequence, 240 residues long: Diglucosylglycerate octanoyltransferase (240 aa).

It belongs to the OctT acyltransferase family. Homotetramer.

It carries out the reaction (2R)-2-O-[alpha-D-glucopyranosyl-(1-&gt;6)-alpha-D-glucopyranosyl]-glycerate + octanoyl-CoA = (2R)-2-O-[6-O-octanoyl-alpha-D-glucopyranosyl-(1-&gt;6)-alpha-D-glucopyranosyl]-glycerate + CoA. Its function is as follows. Sugar octanoyltransferase likely involved in the biosynthesis of mycobacterial methylglucose lipopolysaccharide (MGLP). Catalyzes the transfer of an octanoyl group from octanoyl-CoA to the C6 OH of the second glucose in diglucosylglycerate (DGG). Can also use hexanoyl-CoA as acyl donor in vitro. DGG is the preferred acceptor, but to a lesser extent, GG (glucosylglycerate) can be used as substrate. DGG and GG are the two earliest intermediates in MGLP biosynthesis. This Mycolicibacterium hassiacum (strain DSM 44199 / CIP 105218 / JCM 12690 / 3849) (Mycobacterium hassiacum) protein is Diglucosylglycerate octanoyltransferase.